The sequence spans 152 residues: Chemokine-like factor (152 aa).

Residues 13-133 (FCFSVKGHVK…DGALIYRKLL (121 aa)) form the MARVEL domain. The next 3 membrane-spanning stretches (helical) occupy residues 45–65 (YIVI…LYVL), 81–101 (IINS…ALIP), and 108–128 (VGGG…GALI).

Belongs to the chemokine-like factor family. Isoform 1, isoform 2, isoform 3 and isoform 4 have highest expression levels in adult spleen, lung, testis, ovary, peripheral blood leukocyte, placenta, pancreas, and in fetal brain, skeletal muscle, thymus and heart. Lower expression levels in adult skeletal muscle, liver, thymus colon, prostate and fetal spleen and liver.

It is found in the secreted. The protein resides in the membrane. With respect to regulation, partly inhibited by interleukin 10. In terms of biological role, may play an important role in inflammation and regeneration of skeletal muscle. Essential for embryonic development. Has chemotactic response in monocytes, neutrophils and lymphocytes. Binds CCR4. The protein is Chemokine-like factor (CKLF) of Homo sapiens (Human).